Reading from the N-terminus, the 120-residue chain is Large ribosomal subunit protein eL8 (120 aa).

Belongs to the eukaryotic ribosomal protein eL8 family. As to quaternary structure, part of the 50S ribosomal subunit. Probably part of the RNase P complex.

It localises to the cytoplasm. Its function is as follows. Multifunctional RNA-binding protein that recognizes the K-turn motif in ribosomal RNA, the RNA component of RNase P, box H/ACA, box C/D and box C'/D' sRNAs. This is Large ribosomal subunit protein eL8 from Methanosarcina mazei (strain ATCC BAA-159 / DSM 3647 / Goe1 / Go1 / JCM 11833 / OCM 88) (Methanosarcina frisia).